The chain runs to 358 residues: MARRQDEQRGGAPLIAEGKSDAEVKLILYHWTHSFSSQKVRLVIAEKALKCEEHDVSLPLSEHNEPWFMRLNSTGEVPVLIHGENIICEATQIIDYLEQTFLDEKTPRLMPDKGSMYYPRVQHYRELLDSLPMDAYTHGCILHPELTVDSMIPAYATTRIRSQIGNTESELKKLAEENPDLQEAYIAKQKRLKSKLLDHDNVKYLKKILDELEKVLDQVETELQRRNEETPEEGRQPWLCGESFTLADVSLAVTLHRLKFLGFARRNWGNGKRPNLETYYERVLKRKTFNKVLGHVNNILISAVLPTAFRVAKKRAPKVLGTTLVVGLLAGMGYFAFMLFRKRLGSMILALRPRPNYF.

Residues 24–105 (VKLILYHWTH…YLEQTFLDEK (82 aa)) form the GST N-terminal domain. Glycyl lysine isopeptide (Lys-Gly) (interchain with G-Cter in ubiquitin) cross-links involve residues Lys50, Lys172, Lys173, Lys188, and Lys190. Residues 153-309 (PAYATTRIRS…LISAVLPTAF (157 aa)) form the GST C-terminal domain. Lys203 carries the post-translational modification N6-acetyllysine; alternate. Residue Lys203 forms a Glycyl lysine isopeptide (Lys-Gly) (interchain with G-Cter in ubiquitin); alternate linkage. Residues Lys206, Lys207, and Lys214 each participate in a glycyl lysine isopeptide (Lys-Gly) (interchain with G-Cter in ubiquitin) cross-link. The next 2 membrane-spanning stretches (helical) occupy residues 292–312 (VLGH…FRVA) and 320–340 (LGTT…FMLF). The interval 320–358 (LGTTLVVGLLAGMGYFAFMLFRKRLGSMILALRPRPNYF) is required for mitochondrial localization.

It belongs to the GST superfamily. In terms of assembly, homodimer. In terms of processing, ubiquitinated by PRKN during mitophagy, leading to its degradation and enhancement of mitophagy. Deubiquitinated by USP30.

The protein localises to the mitochondrion outer membrane. The protein resides in the cytoplasm. Regulates the mitochondrial network by promoting mitochondrial fission. The sequence is that of Ganglioside-induced differentiation-associated protein 1 (GDAP1) from Bos taurus (Bovine).